Here is a 221-residue protein sequence, read N- to C-terminus: MSDGQARDLMAQRFRGFLPVVVDLETGGFNAQRDALLEIAAVTLTMDAQGNLMPDDTHAFHVRPFEGANIEQAALDFTGIDLDSPLRQQVALSEHDALGEIFKPVRKAIKANQCTRAILVGHNAAFDQGFLNAAVERNGIKRNPFHPFSCFDTATLGGLVYGQTVLARACRAAGIEFDNASAHSARYDTERTAELFCAMVNRYKNLGGWDLALKEQGMDED.

Residues 20 to 196 enclose the Exonuclease domain; that stretch reads VVVDLETGGF…YDTERTAELF (177 aa). Residues Asp-23, Glu-25, His-183, and Asp-188 each contribute to the Mg(2+) site. The active-site Proton donor/acceptor is the His-183.

This sequence belongs to the RNase T family. Homodimer. It depends on Mg(2+) as a cofactor.

Functionally, trims short 3' overhangs of a variety of RNA species, leaving a one or two nucleotide 3' overhang. Responsible for the end-turnover of tRNA: specifically removes the terminal AMP residue from uncharged tRNA (tRNA-C-C-A). Also appears to be involved in tRNA biosynthesis. The protein is Ribonuclease T of Chromohalobacter salexigens (strain ATCC BAA-138 / DSM 3043 / CIP 106854 / NCIMB 13768 / 1H11).